The following is a 136-amino-acid chain: 5-hydroxyisourate hydrolase (136 aa).

Positions 1–22 are cleaved as a signal peptide; that stretch reads MKRHILATVIASLVAAPAMALA. Residues H31, R69, and Y133 each coordinate substrate.

This sequence belongs to the transthyretin family. 5-hydroxyisourate hydrolase subfamily. In terms of assembly, homotetramer.

It localises to the periplasm. The catalysed reaction is 5-hydroxyisourate + H2O = 5-hydroxy-2-oxo-4-ureido-2,5-dihydro-1H-imidazole-5-carboxylate + H(+). In terms of biological role, catalyzes the hydrolysis of 5-hydroxyisourate (HIU) to 2-oxo-4-hydroxy-4-carboxy-5-ureidoimidazoline (OHCU). The protein is 5-hydroxyisourate hydrolase (hiuH) of Salmonella dublin.